Consider the following 282-residue polypeptide: DegV domain-containing protein M6_Spy0690 (282 aa).

Residues 3–280 (LAVITDSTAT…EGAIAFGVTP (278 aa)) form the DegV domain. 2 residues coordinate hexadecanoate: threonine 61 and serine 94.

May bind long-chain fatty acids, such as palmitate, and may play a role in lipid transport or fatty acid metabolism. The chain is DegV domain-containing protein M6_Spy0690 from Streptococcus pyogenes serotype M6 (strain ATCC BAA-946 / MGAS10394).